The primary structure comprises 293 residues: Elongation factor Ts (293 aa).

An involved in Mg(2+) ion dislocation from EF-Tu region spans residues 79–82; the sequence is TDFV.

It belongs to the EF-Ts family.

Its subcellular location is the cytoplasm. Its function is as follows. Associates with the EF-Tu.GDP complex and induces the exchange of GDP to GTP. It remains bound to the aminoacyl-tRNA.EF-Tu.GTP complex up to the GTP hydrolysis stage on the ribosome. The sequence is that of Elongation factor Ts from Bacillus licheniformis (strain ATCC 14580 / DSM 13 / JCM 2505 / CCUG 7422 / NBRC 12200 / NCIMB 9375 / NCTC 10341 / NRRL NRS-1264 / Gibson 46).